Reading from the N-terminus, the 142-residue chain is Baculoviral IAP repeat-containing protein 5 (142 aa).

One copy of the BIR repeat lies at 18-88 (RVSTFKNWPF…KHSSGCAFLS (71 aa)). A Phosphoserine; by AURKC modification is found at Ser20. At Lys23 the chain carries N6-acetyllysine. Phosphothreonine; by CDK1 and CDK15 is present on Thr34. The residue at position 48 (Thr48) is a Phosphothreonine. 4 residues coordinate Zn(2+): Cys57, Cys60, His77, and Cys84. Residues Lys90, Lys110, Lys112, and Lys115 each carry the N6-acetyllysine modification. Thr117 carries the phosphothreonine; by AURKB modification. Position 129 is an N6-acetyllysine (Lys129).

It belongs to the IAP family. Monomer or homodimer. Exists as a homodimer in the apo state and as a monomer in the CPC-bound state. The monomer protects cells against apoptosis more efficiently than the dimer. Only the dimeric form is capable of enhancing tubulin stability in cells. When phosphorylated, interacts with LAMTOR5/HBXIP; the resulting complex binds pro-CASP9, as well as active CASP9, but much less efficiently. Component of the chromosomal passenger complex (CPC) composed of at least BIRC5/survivin, CDCA8/borealin, INCENP, AURKB or AURKC; in the complex forms a triple-helix bundle-based subcomplex with INCENP and CDCA8. Interacts with JTB. Interacts (via BIR domain) with histone H3 phosphorylated at 'Thr-3' (H3pT3). Interacts with EVI5. Interacts with GTP-bound RAN in both the S and M phases of the cell cycle. Interacts with USP9X. Interacts with tubulin. Interacts with BIRC2/c-IAP1. The acetylated form at Lys-129 interacts with STAT3. The monomeric form deacetylated at Lys-129 interacts with XPO1/CRM1. The monomeric form interacts with XIAP/BIRC4. Both the dimeric and monomeric form can interact with DIABLO/SMAC. Interacts with BIRC6/bruce. Interacts with FBXL7; this interaction facilitates the polyubiquitination and subsequent proteasomal degradation of BIRC5 by the SCF(FBXL7) E3 ubiquitin-protein ligase complex. Post-translationally, ubiquitinated by the Cul9-RING ubiquitin-protein ligase complex, leading to its degradation. Ubiquitination is required for centrosomal targeting. Deubiquitinated by USP35 or USP38; leading to stabilization. In terms of processing, acetylation at Lys-129 results in its homodimerization, while deacetylation promotes the formation of monomers which heterodimerize with XPO1/CRM1 which facilitates its nuclear export. The acetylated form represses STAT3 transactivation. The dynamic equilibrium between its acetylation and deacetylation at Lys-129 determines its interaction with XPO1/CRM1, its subsequent subcellular localization, and its ability to inhibit STAT3 transactivation. In vitro phosphorylation at Thr-117 by AURKB prevents interaction with INCENP and localization to mitotic chromosomes. Phosphorylation at Thr-48 by CK2 is critical for its mitotic and anti-apoptotic activities. Phosphorylation at Thr-34 by CDK15 is critical for its anti-apoptotic activity. Phosphorylation at Ser-20 by AURKC is critical for regulation of proper chromosome alignment and segregation, and possibly cytokinesis.

Its subcellular location is the cytoplasm. The protein resides in the nucleus. It localises to the chromosome. It is found in the centromere. The protein localises to the cytoskeleton. Its subcellular location is the spindle. The protein resides in the kinetochore. It localises to the midbody. Multitasking protein that has dual roles in promoting cell proliferation and preventing apoptosis. Component of a chromosome passage protein complex (CPC) which is essential for chromosome alignment and segregation during mitosis and cytokinesis. Acts as an important regulator of the localization of this complex; directs CPC movement to different locations from the inner centromere during prometaphase to midbody during cytokinesis and participates in the organization of the center spindle by associating with polymerized microtubules. Involved in the recruitment of CPC to centromeres during early mitosis via association with histone H3 phosphorylated at 'Thr-3' (H3pT3) during mitosis. The complex with RAN plays a role in mitotic spindle formation by serving as a physical scaffold to help deliver the RAN effector molecule TPX2 to microtubules. May counteract a default induction of apoptosis in G2/M phase. The acetylated form represses STAT3 transactivation of target gene promoters. May play a role in neoplasia. Inhibitor of CASP3 and CASP7. Essential for the maintenance of mitochondrial integrity and function. This is Baculoviral IAP repeat-containing protein 5 (BIRC5) from Canis lupus familiaris (Dog).